A 96-amino-acid chain; its full sequence is Pyrimidine/purine nucleoside phosphorylase (96 aa).

It belongs to the nucleoside phosphorylase PpnP family.

It carries out the reaction a purine D-ribonucleoside + phosphate = a purine nucleobase + alpha-D-ribose 1-phosphate. The enzyme catalyses adenosine + phosphate = alpha-D-ribose 1-phosphate + adenine. It catalyses the reaction cytidine + phosphate = cytosine + alpha-D-ribose 1-phosphate. The catalysed reaction is guanosine + phosphate = alpha-D-ribose 1-phosphate + guanine. It carries out the reaction inosine + phosphate = alpha-D-ribose 1-phosphate + hypoxanthine. The enzyme catalyses thymidine + phosphate = 2-deoxy-alpha-D-ribose 1-phosphate + thymine. It catalyses the reaction uridine + phosphate = alpha-D-ribose 1-phosphate + uracil. The catalysed reaction is xanthosine + phosphate = alpha-D-ribose 1-phosphate + xanthine. Functionally, catalyzes the phosphorolysis of diverse nucleosides, yielding D-ribose 1-phosphate and the respective free bases. Can use uridine, adenosine, guanosine, cytidine, thymidine, inosine and xanthosine as substrates. Also catalyzes the reverse reactions. The chain is Pyrimidine/purine nucleoside phosphorylase from Erwinia tasmaniensis (strain DSM 17950 / CFBP 7177 / CIP 109463 / NCPPB 4357 / Et1/99).